A 479-amino-acid polypeptide reads, in one-letter code: Aspartyl/glutamyl-tRNA(Asn/Gln) amidotransferase subunit B (479 aa).

Belongs to the GatB/GatE family. GatB subfamily. Heterotrimer of A, B and C subunits.

The enzyme catalyses L-glutamyl-tRNA(Gln) + L-glutamine + ATP + H2O = L-glutaminyl-tRNA(Gln) + L-glutamate + ADP + phosphate + H(+). It catalyses the reaction L-aspartyl-tRNA(Asn) + L-glutamine + ATP + H2O = L-asparaginyl-tRNA(Asn) + L-glutamate + ADP + phosphate + 2 H(+). In terms of biological role, allows the formation of correctly charged Asn-tRNA(Asn) or Gln-tRNA(Gln) through the transamidation of misacylated Asp-tRNA(Asn) or Glu-tRNA(Gln) in organisms which lack either or both of asparaginyl-tRNA or glutaminyl-tRNA synthetases. The reaction takes place in the presence of glutamine and ATP through an activated phospho-Asp-tRNA(Asn) or phospho-Glu-tRNA(Gln). The chain is Aspartyl/glutamyl-tRNA(Asn/Gln) amidotransferase subunit B from Geotalea daltonii (strain DSM 22248 / JCM 15807 / FRC-32) (Geobacter daltonii).